The following is a 299-amino-acid chain: Putative S-adenosyl-L-methionine-dependent methyltransferase MAB_0027c (299 aa).

Residues D126 and 155–156 (DL) each bind S-adenosyl-L-methionine.

This sequence belongs to the UPF0677 family.

Functionally, exhibits S-adenosyl-L-methionine-dependent methyltransferase activity. The chain is Putative S-adenosyl-L-methionine-dependent methyltransferase MAB_0027c from Mycobacteroides abscessus (strain ATCC 19977 / DSM 44196 / CCUG 20993 / CIP 104536 / JCM 13569 / NCTC 13031 / TMC 1543 / L948) (Mycobacterium abscessus).